A 230-amino-acid polypeptide reads, in one-letter code: Cytidylate kinase (230 aa).

16-24 contacts ATP; that stretch reads GPASAGKST.

It belongs to the cytidylate kinase family. Type 1 subfamily.

Its subcellular location is the cytoplasm. The catalysed reaction is CMP + ATP = CDP + ADP. It carries out the reaction dCMP + ATP = dCDP + ADP. The protein is Cytidylate kinase of Lactobacillus johnsonii (strain CNCM I-12250 / La1 / NCC 533).